A 1014-amino-acid chain; its full sequence is Regulator of telomere elongation helicase 1 homolog (1014 aa).

Positions 7-308 (RGVDVDFPYD…NSADKQFDPE (302 aa)) constitute a Helicase ATP-binding domain. 42 to 49 (SPTGTGKT) is an ATP binding site. A compositionally biased stretch (gly residues) spans 70 to 85 (GGGGGGGGGGGGGGGS). Positions 70-106 (GGGGGGGGGGGGGGGSQQPPYGSQPSGSQHSGGSASQ) are disordered. Residues 86-106 (QQPPYGSQPSGSQHSGGSASQ) show a composition bias toward low complexity. Cys149, Cys170, Cys175, and Cys211 together coordinate [4Fe-4S] cluster. A DEAH box motif is present at residues 255-258 (DEAH). Residues 906–930 (SSKKSNITHAPGNSGAIHEKSGGQE) form a disordered region.

This sequence belongs to the helicase family. RAD3/XPD subfamily.

Its subcellular location is the nucleus. The catalysed reaction is ATP + H2O = ADP + phosphate + H(+). In terms of biological role, a probable ATP-dependent DNA helicase implicated in DNA replication, DNA repair and the maintenance of genomic stability. Acts as an anti-recombinase to counteract toxic recombination and limit crossover during meiosis. Regulates meiotic recombination and crossover homeostasis by physically dissociating strand invasion events and thereby promotes noncrossover repair by meiotic synthesis dependent strand annealing (SDSA) as well as disassembly of D loop recombination intermediates. The protein is Regulator of telomere elongation helicase 1 homolog of Oryza sativa subsp. japonica (Rice).